The chain runs to 229 residues: Deoxyribose-phosphate aldolase (229 aa).

Asp96 acts as the Proton donor/acceptor in catalysis. Lys166 serves as the catalytic Schiff-base intermediate with acetaldehyde. Residue Lys195 is the Proton donor/acceptor of the active site.

This sequence belongs to the DeoC/FbaB aldolase family. DeoC type 1 subfamily.

The protein resides in the cytoplasm. The catalysed reaction is 2-deoxy-D-ribose 5-phosphate = D-glyceraldehyde 3-phosphate + acetaldehyde. The protein operates within carbohydrate degradation; 2-deoxy-D-ribose 1-phosphate degradation; D-glyceraldehyde 3-phosphate and acetaldehyde from 2-deoxy-alpha-D-ribose 1-phosphate: step 2/2. Catalyzes a reversible aldol reaction between acetaldehyde and D-glyceraldehyde 3-phosphate to generate 2-deoxy-D-ribose 5-phosphate. The protein is Deoxyribose-phosphate aldolase of Micrococcus luteus (strain ATCC 4698 / DSM 20030 / JCM 1464 / CCM 169 / CCUG 5858 / IAM 1056 / NBRC 3333 / NCIMB 9278 / NCTC 2665 / VKM Ac-2230) (Micrococcus lysodeikticus).